A 504-amino-acid chain; its full sequence is Cytochrome P450 2K4 (504 aa).

Cysteine 447 provides a ligand contact to heme.

Belongs to the cytochrome P450 family. Requires heme as cofactor.

The protein resides in the endoplasmic reticulum membrane. It is found in the microsome membrane. The enzyme catalyses an organic molecule + reduced [NADPH--hemoprotein reductase] + O2 = an alcohol + oxidized [NADPH--hemoprotein reductase] + H2O + H(+). The protein is Cytochrome P450 2K4 (cyp2k4) of Oncorhynchus mykiss (Rainbow trout).